Reading from the N-terminus, the 314-residue chain is MKPCSVLVVGGTGYIGKRIVSASLYLGHDTYVLKRPGTGLDIEKLQLLLSFKKRGAHLVEASFSDHDSLVRAVRLVDVVICTMSGVHFRSHNILLQLKLVEAIKEAGNVKRFIPSEFGMDPARMGQAMEPGRETFDQKMVVRKAIEEANIPHTYISANCFAGYFVGNLSQLGTLTPPSDKVIIYGDGNVKVVYVDEDDVAKYTIKAIEDDRTVNKTVYLRPPENMMSQRELVAVWEKLSGNQLEKIELPPQDFLALMEGTTVAEQAGIGHFYHIFYEGCLTNFEINAENGEEEASRLYPEVEYTRVHDYLKIYL.

Residues 10 to 16 (GGTGYIG), R35, and K44 each bind NADP(+). K138 acts as the Proton acceptor in catalysis. Residue R142 participates in NADP(+) binding. H270 is a binding site for substrate.

It belongs to the NmrA-type oxidoreductase family. Isoflavone reductase subfamily. As to quaternary structure, dimer.

The catalysed reaction is (+)-lariciresinol + NADP(+) = (+)-pinoresinol + NADPH + H(+). It carries out the reaction (+)-secoisolariciresinol + NADP(+) = (-)-lariciresinol + NADPH + H(+). Functionally, reductase involved in the lignan justicidin B biosynthesis. Catalyzes the enantioselective conversion of (+)-pinoresinol into (+)-lariciresinol and of (-)-lariciresinol into (+)-secoisolariciresinol. Low activity with the other enantiomers. Abstracts the 4R-hydride from the NADPH cofactor during catalysis. The sequence is that of Bifunctional pinoresinol-lariciresinol reductase (PLR_Lp1) from Linum perenne (Perennial flax).